The sequence spans 611 residues: Protein spaetzle 3 (611 aa).

Residues 1 to 14 (MALTNFSLPFGALG) form the signal peptide. The N-linked (GlcNAc...) asparagine glycan is linked to Asn-5. The disordered stretch occupies residues 57–322 (EYFKNNPYAP…NDKSNNNQMP (266 aa)). Composition is skewed to low complexity over residues 104-120 (QQVQ…QHQQ), 127-153 (SVSF…LTQT), and 169-185 (PGQQ…QQKQ). Residues 191–210 (GSASATFTKNSGSFSITSFG) are compositionally biased toward polar residues. Over residues 218 to 239 (PPQPQQPPPSQQQQPPPAPPPQ) the composition is skewed to pro residues. Acidic residues predominate over residues 288 to 306 (YDVEEGEEDEEEDGEEEGQ). Residues Asn-335 and Asn-351 are each glycosylated (N-linked (GlcNAc...) asparagine). Positions 477–518 (KKRQAAAGGSRNRGGSAGGSGNGNTNANRQPGNKNGSSGTGR) are disordered. Gly residues predominate over residues 487–498 (RNRGGSAGGSGN). The N-linked (GlcNAc...) asparagine glycan is linked to Asn-511. The Spaetzle domain maps to 521–609 (ACESKIEIVT…LFPSCCVCRC (89 aa)). 3 cysteine pairs are disulfide-bonded: Cys-522-Cys-573, Cys-559-Cys-605, and Cys-567-Cys-607.

As to quaternary structure, homodimer; disulfide-linked.

Its function is as follows. Neurotrophin which may function as a ligand to the Toll-related receptor Tollo. Involved in a Tollo and JNK signaling pathway that positively regulates neuromuscular junction (NMJ) growth in presynaptic motorneurons. May function by activating Tollo to promote the phosphorylation of JNK. The polypeptide is Protein spaetzle 3 (Drosophila melanogaster (Fruit fly)).